We begin with the raw amino-acid sequence, 450 residues long: LanC-like protein 2 (450 aa).

G2 carries N-myristoyl glycine lipidation. The tract at residues 2-14 (GETMSKRLKFHLG) is interaction with inositol phospholipids. Y198 bears the Phosphotyrosine mark.

The protein belongs to the LanC-like protein family. As to quaternary structure, interacts with an array of inositol phospholipids such as phosphatidylinositol 3-phosphate (PI3P), phosphatidylinositol 4-phosphate (PI4P) and phosphatidylinositol 5-phosphate (PI5P). PIP-binding enhances membrane association. In terms of processing, myristoylated. Essential for membrane association.

It is found in the nucleus. The protein localises to the cytoplasm. It localises to the cell membrane. In terms of biological role, necessary for abscisic acid (ABA) binding on the cell membrane and activation of the ABA signaling pathway in granulocytes. This Mus musculus (Mouse) protein is LanC-like protein 2 (Lancl2).